Reading from the N-terminus, the 146-residue chain is Ribosome-binding factor A (146 aa).

The segment at 121–146 is disordered; that stretch reads KQQQFGSADDVTENDIDEADDTEGKA. Acidic residues predominate over residues 130-146; sequence DVTENDIDEADDTEGKA.

Belongs to the RbfA family. Monomer. Binds 30S ribosomal subunits, but not 50S ribosomal subunits or 70S ribosomes.

It localises to the cytoplasm. Its function is as follows. One of several proteins that assist in the late maturation steps of the functional core of the 30S ribosomal subunit. Associates with free 30S ribosomal subunits (but not with 30S subunits that are part of 70S ribosomes or polysomes). Required for efficient processing of 16S rRNA. May interact with the 5'-terminal helix region of 16S rRNA. The protein is Ribosome-binding factor A of Shewanella sp. (strain MR-4).